The chain runs to 274 residues: Chromatin modification-related protein YNG2 (274 aa).

Residues glutamate 121 to aspartate 194 form a disordered region. A compositionally biased stretch (basic and acidic residues) spans threonine 166 to aspartate 180. A PHD-type zinc finger spans residues asparagine 215–glutamate 264. Cysteine 218, cysteine 220, cysteine 231, cysteine 236, histidine 242, cysteine 245, cysteine 258, and cysteine 261 together coordinate Zn(2+).

This sequence belongs to the ING family. As to quaternary structure, interacts with H3K4me3 and to a lesser extent with H3K4me2. Component of the NuA4 histone acetyltransferase complex.

It is found in the nucleus. Component of the NuA4 histone acetyltransferase complex which is involved in transcriptional activation of selected genes principally by acetylation of nucleosomal histone H4 and H2A. The NuA4 complex is also involved in DNA repair. Involved in cell cycle progression and meiosis. The protein is Chromatin modification-related protein YNG2 (YNG2) of Candida glabrata (strain ATCC 2001 / BCRC 20586 / JCM 3761 / NBRC 0622 / NRRL Y-65 / CBS 138) (Yeast).